An 842-amino-acid polypeptide reads, in one-letter code: Type VI secretion system spike protein VgrG2a (842 aa).

The interval 265–291 (RSGAGRPFSESRLRGHRRDARVASVSG) is disordered.

The protein belongs to the VgrG protein family.

Part of the H2 type VI secretion system (H2-T6SS) specialized secretion system, which delivers several virulence factors in both prokaryotic and eukaryotic cells during infection. May form the spike at the tip of the elongating tube formed by haemolysin co-regulated protein 2a/Hcp2a. In turn, may allow the delivery of the Tle4 antibacterial toxin to target cells where it exerts its toxicity. Also promotes the release of VgrG2b toxin to the host cell. The sequence is that of Type VI secretion system spike protein VgrG2a from Pseudomonas aeruginosa (strain ATCC 15692 / DSM 22644 / CIP 104116 / JCM 14847 / LMG 12228 / 1C / PRS 101 / PAO1).